We begin with the raw amino-acid sequence, 177 residues long: O-acetyl-ADP-ribose deacetylase (177 aa).

Positions 1 to 175 (MNSRIHVIHG…LYQRLLTQQG (175 aa)) constitute a Macro domain. Substrate-binding positions include 11–12 (DI), Asn-25, 33–35 (GVD), and 122–126 (STGVY). Asp-35 acts as the Proton acceptor in catalysis.

The protein belongs to the MacroD-type family. YmdB subfamily. In terms of assembly, homodimer. Interacts with RNase III.

It catalyses the reaction 3''-O-acetyl-ADP-D-ribose + H2O = ADP-D-ribose + acetate + H(+). The catalysed reaction is 2''-O-acetyl-ADP-D-ribose + H2O = ADP-D-ribose + acetate + H(+). Functionally, deacetylates O-acetyl-ADP ribose to yield ADP-ribose and free acetate. Down-regulates ribonuclease 3 (RNase III) activity. Acts by interacting directly with the region of the ribonuclease that is required for dimerization/activation. This Citrobacter rodentium (strain ICC168) (Citrobacter freundii biotype 4280) protein is O-acetyl-ADP-ribose deacetylase.